We begin with the raw amino-acid sequence, 801 residues long: Phenylalanine--tRNA ligase beta subunit (801 aa).

One can recognise a tRNA-binding domain in the interval 39 to 153; the sequence is ADGLSKLVVG…EEAVPGDAIF (115 aa). One can recognise a B5 domain in the interval 406 to 481; that stretch reads TEPVEVSTSL…RIYGYDKLPT (76 aa). Mg(2+) contacts are provided by aspartate 459, aspartate 465, glutamate 468, and glutamate 469. Residues 708 to 801 form the FDX-ACB domain; it reads TKFPAMTRDV…LTEQVGAEVR (94 aa).

The protein belongs to the phenylalanyl-tRNA synthetase beta subunit family. Type 1 subfamily. In terms of assembly, tetramer of two alpha and two beta subunits. The cofactor is Mg(2+).

The protein resides in the cytoplasm. The enzyme catalyses tRNA(Phe) + L-phenylalanine + ATP = L-phenylalanyl-tRNA(Phe) + AMP + diphosphate + H(+). This chain is Phenylalanine--tRNA ligase beta subunit, found in Streptococcus pyogenes serotype M1.